A 348-amino-acid chain; its full sequence is Chaperone protein DnaJ (348 aa).

The J domain occupies 3 to 65 (DLYGILGVDH…EQRQRYDRHV (63 aa)). The CR-type zinc finger occupies 109–191 (GGSQVVKIDS…CYGNGSRSAP (83 aa)). Residues cysteine 122, cysteine 125, cysteine 139, cysteine 142, cysteine 165, cysteine 168, cysteine 179, and cysteine 182 each coordinate Zn(2+). CXXCXGXG motif repeat units lie at residues 122 to 129 (CDVCNGTR), 139 to 146 (CFDCNGSG), 165 to 172 (CSKCRGNG), and 179 to 186 (CRRCYGNG).

Belongs to the DnaJ family. As to quaternary structure, homodimer. The cofactor is Zn(2+).

The protein localises to the cytoplasm. Functionally, participates actively in the response to hyperosmotic and heat shock by preventing the aggregation of stress-denatured proteins and by disaggregating proteins, also in an autonomous, DnaK-independent fashion. Unfolded proteins bind initially to DnaJ; upon interaction with the DnaJ-bound protein, DnaK hydrolyzes its bound ATP, resulting in the formation of a stable complex. GrpE releases ADP from DnaK; ATP binding to DnaK triggers the release of the substrate protein, thus completing the reaction cycle. Several rounds of ATP-dependent interactions between DnaJ, DnaK and GrpE are required for fully efficient folding. Also involved, together with DnaK and GrpE, in the DNA replication of plasmids through activation of initiation proteins. This chain is Chaperone protein DnaJ, found in Tropheryma whipplei (strain TW08/27) (Whipple's bacillus).